A 348-amino-acid chain; its full sequence is UDP-N-acetyl-alpha-D-glucosaminouronate 4-epimerase (348 aa).

The NAD(+) site is built by Phe26, Ile27, Asp46, Thr50, Gly51, Asp77, Ile78, Gln97, Tyr165, Lys169, and Val195. Tyr165 serves as the catalytic Proton acceptor.

This sequence belongs to the NAD(P)-dependent epimerase/dehydratase family. In terms of assembly, homodimer. NAD(+) is required as a cofactor.

The enzyme catalyses UDP-2-acetamido-2-deoxy-alpha-D-glucuronate = UDP-2-acetamido-2-deoxy-alpha-D-galacturonate. It carries out the reaction UDP-N-acetyl-alpha-D-glucosamine = UDP-N-acetyl-alpha-D-galactosamine. It participates in capsule biogenesis; capsule polysaccharide biosynthesis. It functions in the pathway glycan metabolism; Vi-antigen biosynthesis. In terms of biological role, epimerase required for the biosynthesis of the capsular polysaccharide, commonly referred as the Vi antigen, an important virulence factor. Catalyzes the reversible epimerization of UDP-N-acetylglucosaminuronic acid (UDP-GlcNAcA) to UDP-N-acetylgalactosaminuronic acid (UDP-GalNAcA). Also catalyzes, with lower efficiency, the reversible epimerization of UDP-N-acetylglucosamine (UDP-GlcNAc) to UDP-N-acetylgalactosamine (UDP-GalNAc). Cannot use UDP-glucose (UDP-Glc) and UDP-galactose (UDP-Gal) as substrates. This chain is UDP-N-acetyl-alpha-D-glucosaminouronate 4-epimerase, found in Salmonella typhi.